A 216-amino-acid chain; its full sequence is ATP phosphoribosyltransferase (216 aa).

It belongs to the ATP phosphoribosyltransferase family. Short subfamily. As to quaternary structure, heteromultimer composed of HisG and HisZ subunits.

The protein resides in the cytoplasm. The catalysed reaction is 1-(5-phospho-beta-D-ribosyl)-ATP + diphosphate = 5-phospho-alpha-D-ribose 1-diphosphate + ATP. Its pathway is amino-acid biosynthesis; L-histidine biosynthesis; L-histidine from 5-phospho-alpha-D-ribose 1-diphosphate: step 1/9. Catalyzes the condensation of ATP and 5-phosphoribose 1-diphosphate to form N'-(5'-phosphoribosyl)-ATP (PR-ATP). Has a crucial role in the pathway because the rate of histidine biosynthesis seems to be controlled primarily by regulation of HisG enzymatic activity. This chain is ATP phosphoribosyltransferase, found in Lachnospira eligens (strain ATCC 27750 / DSM 3376 / VPI C15-48 / C15-B4) (Eubacterium eligens).